The sequence spans 409 residues: ATPase ASNA1 homolog (409 aa).

21–28 (KGGVGKTT) is a binding site for ATP. The active site involves D62. Positions 303 and 330 each coordinate ATP. 2 residues coordinate Zn(2+): C342 and C345.

Belongs to the arsA ATPase family. In terms of assembly, homodimer.

It localises to the cytoplasm. The protein localises to the endoplasmic reticulum. ATPase required for the post-translational delivery of tail-anchored (TA) proteins to the endoplasmic reticulum. Recognizes and selectively binds the transmembrane domain of TA proteins in the cytosol. This complex then targets to the endoplasmic reticulum by membrane-bound receptors, where the tail-anchored protein is released for insertion. This process is regulated by ATP binding and hydrolysis. ATP binding drives the homodimer towards the closed dimer state, facilitating recognition of newly synthesized TA membrane proteins. ATP hydrolysis is required for insertion. Subsequently, the homodimer reverts towards the open dimer state, lowering its affinity for the membrane-bound receptor, and returning it to the cytosol to initiate a new round of targeting. This Leishmania major protein is ATPase ASNA1 homolog.